Consider the following 508-residue polypeptide: MDLKKQYIIALDEGTSSCRSIVFDHNLNQIAIAQNEFNTFFPNSGWVEQDPLEIWSAQLATMQSAKNKAQIKSHEVIAVGITNQRETIVLWNKENGLPVYNAIVWQDQRTAALCQKFNEDKLIQTKVKQKTGLPINPYFSATKIAWILKNVPLAKKLMEQKKLLFGTIDSWLIWKLTNGKMHVTDVSNASRTLLFDIVKMEWSKELCDLFEVPVSILPKVLSSNAYFGDIETNHWSSNAKGIVPIRAVLGDQQAALFGQLCTEPGMVKNTYGTGCFVLMNIGDKPTLSKHNLLTTVAWQLENHPPVYALEGSVFVAGAAIKWLRDALKIIYSEKESDFYAELAKENEQNLVFVPAFSGLGAPWWDASARGIILGIEASTKREHIVKASLESIAFQTNDLLNAMASDLGYKITSIKADGGIVKSNYLMQFQADIADVIVSIPKNKETTAVGVCFLAGLACGFWKDIHQLEKLTTLDKKFKSTMDPNIRKTKINSWHKAVERALKWKEID.

T15 lines the ADP pocket. Residues T15, S16, and S17 each contribute to the ATP site. T15 contributes to the sn-glycerol 3-phosphate binding site. R19 contacts ADP. Sn-glycerol 3-phosphate-binding residues include R85, E86, Y138, and D251. Positions 85, 86, 138, 251, and 252 each coordinate glycerol. ADP-binding residues include T273, G317, and G419. Residues T273, G317, and G419 each coordinate ATP.

Belongs to the FGGY kinase family.

It catalyses the reaction glycerol + ATP = sn-glycerol 3-phosphate + ADP + H(+). The protein operates within polyol metabolism; glycerol degradation via glycerol kinase pathway; sn-glycerol 3-phosphate from glycerol: step 1/1. With respect to regulation, inhibited by fructose 1,6-bisphosphate (FBP). Its function is as follows. Key enzyme in the regulation of glycerol uptake and metabolism. Catalyzes the phosphorylation of glycerol to yield sn-glycerol 3-phosphate. The polypeptide is Glycerol kinase (Mycoplasma genitalium (strain ATCC 33530 / DSM 19775 / NCTC 10195 / G37) (Mycoplasmoides genitalium)).